We begin with the raw amino-acid sequence, 314 residues long: tRNA dimethylallyltransferase (314 aa).

The disordered stretch occupies residues 1–24; the sequence is MAEEPQRSPAPTSPFAFTVPSNPL. 40-47 serves as a coordination point for ATP; the sequence is GPTASGKS. 42-47 provides a ligand contact to substrate; it reads TASGKS.

It belongs to the IPP transferase family. In terms of assembly, monomer. Mg(2+) serves as cofactor.

It catalyses the reaction adenosine(37) in tRNA + dimethylallyl diphosphate = N(6)-dimethylallyladenosine(37) in tRNA + diphosphate. Functionally, catalyzes the transfer of a dimethylallyl group onto the adenine at position 37 in tRNAs that read codons beginning with uridine, leading to the formation of N6-(dimethylallyl)adenosine (i(6)A). The protein is tRNA dimethylallyltransferase of Cereibacter sphaeroides (strain ATCC 17029 / ATH 2.4.9) (Rhodobacter sphaeroides).